A 694-amino-acid polypeptide reads, in one-letter code: Phosphatase and actin regulator 4-A (694 aa).

Composition is skewed to basic and acidic residues over residues 1-13 and 46-72; these read MEDRSEEGGDHSE and SSDSFRETSEVLERKISTRKPREELIK. Disordered regions lie at residues 1 to 29, 42 to 169, 192 to 403, 426 to 445, and 450 to 572; these read MEDRSEEGGDHSEMPSAPSTPPSKRKSKF, RKRK…QPLP, VNEV…HIRI, LFMQNDMGPSEEGTRVRSLP, and LLKV…QIRQ. The stretch at 55–80 is one RPEL 1 repeat; it reads EVLERKISTRKPREELIKRGLLVEVP. The span at 240 to 267 shows a compositional bias: polar residues; that stretch reads SISTSVTQESAVAGQKSDSSNRLQSSAP. Positions 300 to 317 are enriched in low complexity; sequence AELSLALAGSPLSPAGSR. 2 stretches are compositionally biased toward pro residues: residues 318-327 and 372-381; these read PSPPLPPKRA and SNPPVPPLTL. 3 stretches are compositionally biased toward acidic residues: residues 455–467, 499–511, and 519–529; these read DDEDDESLEDESL, QEEEEGGVSDTDS, and DDEEEEEEEET. RPEL repeat units follow at residues 576–601 and 613–638; these read TQLNRRLSQRPTAEELEQRNILQKNE and RRLTRKLSQRPTVAELVERKILRFNE.

This sequence belongs to the phosphatase and actin regulator family. As to quaternary structure, binds ppp1ca and actin.

It localises to the cytoplasm. The protein localises to the cell projection. Its subcellular location is the lamellipodium. Functionally, regulator of protein phosphatase 1 (PP1) required for neural tube and optic fissure closure, and enteric neural crest cell (ENCCs) migration during development. Acts as an activator of PP1. During neural tube closure, localizes to the ventral neural tube and activates PP1, leading to down-regulate cell proliferation within cranial neural tissue and the neural retina. Also acts as a regulator of migration of enteric neural crest cells (ENCCs) by activating PP1, leading to repression of the integrin signaling through the rho/rock pathway. The protein is Phosphatase and actin regulator 4-A (phactr4-a) of Xenopus laevis (African clawed frog).